A 609-amino-acid chain; its full sequence is D-apionate lactonase (609 aa).

It carries out the reaction D-apionolactone + H2O = D-apionate + H(+). Its pathway is carbohydrate metabolism. Its function is as follows. Involved in catabolism of D-apiose. Hydrolyzes D-apionolactone to D-apionate. This Brucella anthropi (strain ATCC 49188 / DSM 6882 / CCUG 24695 / JCM 21032 / LMG 3331 / NBRC 15819 / NCTC 12168 / Alc 37) (Ochrobactrum anthropi) protein is D-apionate lactonase.